The chain runs to 193 residues: Ion-translocating oxidoreductase complex subunit A (193 aa).

The next 6 helical transmembrane spans lie at 4–24, 38–58, 65–85, 102–122, 134–154, and 171–191; these read LALILVSTVLVNNFVLVKFLG, AMGMALATTFVLTLSAVCSYL, APLGVEYLRTITFIMVIAVVV, VLGIYLPLITTNCAVLGVALL, AVYGFGAAAGFSLVLVLFAAL, and SVALVTAGILSMGFMGFAGLV.

It belongs to the NqrDE/RnfAE family. As to quaternary structure, the complex is composed of six subunits: RnfA, RnfB, RnfC, RnfD, RnfE and RnfG.

The protein resides in the cell inner membrane. In terms of biological role, part of a membrane-bound complex that couples electron transfer with translocation of ions across the membrane. This chain is Ion-translocating oxidoreductase complex subunit A, found in Alkalilimnicola ehrlichii (strain ATCC BAA-1101 / DSM 17681 / MLHE-1).